A 280-amino-acid chain; its full sequence is Dual adapter for phosphotyrosine and 3-phosphotyrosine and 3-phosphoinositide (280 aa).

Residues 1 to 20 (MGRAELLEGKMSTQDPSDLW) are disordered. Positions 35–129 (WYHGNLTRHA…GTLMVLKHPY (95 aa)) constitute an SH2 domain. Tyr139 is subject to Phosphotyrosine. Phosphoserine is present on Ser141. A PH domain is found at 164-259 (LGTKEGYLTK…WIKILRWKLS (96 aa)).

In terms of assembly, interacts with PtdIns(3,4,5)P3 and PLCG2. In vitro, interacts with PtdIns(3,4)P2. Post-translationally, phosphorylated on tyrosine residues. As to expression, highly expressed in placenta and lung, followed by brain, heart, kidney, liver, pancreas and skeletal muscle. Expressed by B-lymphocytes, but not T-lymphocytes or nonhematopoietic cells.

The protein resides in the cytoplasm. It localises to the membrane. Its function is as follows. May act as a B-cell-associated adapter that regulates B-cell antigen receptor (BCR)-signaling downstream of PI3K. In Homo sapiens (Human), this protein is Dual adapter for phosphotyrosine and 3-phosphotyrosine and 3-phosphoinositide (DAPP1).